The following is a 530-amino-acid chain: MEEELRVRLNDHQVSKVFPVKPKSTAKPVSESETPESRYWSSFKNHSTPNLVSSVAALAFSPVHPHSLAVAHSATVSLFSSQSLSSSRRFSFRDVVSSVCFRSDGALFAACDLSGVVQVFDIKERMALRTLRSHSAPARFVKYPVQDKLHLVSGGDDGVVKYWDVAGATVISDLLGHKDYVRCGDCSPVNDSMLVTGSYDHTVKVWDARVHTSNWIAEINHGLPVEDVVYLPSGGLIATAGGNSVKVWDLIGGGKMVCSMESHNKTVTSLRVARMESAESRLVSVALDGYMKVFDYGRAKVTYSMRFPAPLMSLGLSPDGSTRVIGGSNGMVFAGKKKVRDVVGGQKKSLNLWSLISDVDESRRRALRPTYFRYFQRGQSEKPSKDDYLVKEKKGLKLTRHDKLLKKFRHKEALVSVLEEKKPANVVAVMEELVARRKLMKCVSNMEEGELGMLLGFLQRYCTVQRYSGLLMGLTKKVLETRAEDIKGKNEFKGLLRNLKREVNQEIRIQQSLLEIQGVIAPLMRIAGRS.

WD repeat units follow at residues asparagine 50 to arginine 89, serine 91 to threonine 130, serine 133 to aspartate 173, glycine 176 to isoleucine 216, asparagine 220 to cysteine 258, serine 262 to serine 304, and glycine 320 to arginine 363. A Nuclear localization signal motif is present at residues glutamate 392–threonine 399.

As to expression, expressed in cells undergoing active cell divisions, including functional megaspores and the female gametophytic cells. Accumulates in roots, stems, leaves, inflorescences and siliques.

The protein localises to the nucleus. It localises to the nucleolus. Essential protein required for nuclear division and organization during embryo sac development in female gametophyte, probably by promoting rRNA biogenesis essential for the progression of the mitotic division cycles during gametogenesis. Involved in nucleolar processing of pre-18S ribosomal RNA. In Arabidopsis thaliana (Mouse-ear cress), this protein is Protein SLOW WALKER 1.